The following is a 313-amino-acid chain: Acetaldehyde dehydrogenase 2 (313 aa).

12 to 15 (SGNI) lines the NAD(+) pocket. Cysteine 132 acts as the Acyl-thioester intermediate in catalysis. Residues 163–171 (SAGPGTRAN) and asparagine 287 contribute to the NAD(+) site.

Belongs to the acetaldehyde dehydrogenase family.

It catalyses the reaction acetaldehyde + NAD(+) + CoA = acetyl-CoA + NADH + H(+). This Paraburkholderia xenovorans (strain LB400) protein is Acetaldehyde dehydrogenase 2 (amnH).